The chain runs to 185 residues: Putative tyrosine-protein phosphatase OCA1 (185 aa).

In terms of domain architecture, Tyrosine-protein phosphatase spans 18–178 (NFCPVEKQLY…TVEIGSGKGS (161 aa)). Cys116 functions as the Phosphocysteine intermediate in the catalytic mechanism.

It belongs to the protein-tyrosine phosphatase family.

Its subcellular location is the cytoplasm. It carries out the reaction O-phospho-L-tyrosyl-[protein] + H2O = L-tyrosyl-[protein] + phosphate. Functionally, putative tyrosine-protein phosphatase required for protection against superoxide stress. The chain is Putative tyrosine-protein phosphatase OCA1 (OCA1) from Meyerozyma guilliermondii (strain ATCC 6260 / CBS 566 / DSM 6381 / JCM 1539 / NBRC 10279 / NRRL Y-324) (Yeast).